We begin with the raw amino-acid sequence, 86 residues long: Ferredoxin YfhL (86 aa).

2 4Fe-4S ferredoxin-type domains span residues 1-29 (MALL…MGDH) and 31-65 (YEIN…KDPA). Residues Cys-9, Cys-12, Cys-15, Cys-19, Cys-38, Cys-41, Cys-50, and Cys-54 each coordinate [4Fe-4S] cluster.

It depends on [4Fe-4S] cluster as a cofactor.

Functionally, ferredoxins are iron-sulfur proteins that transfer electrons in a wide variety of metabolic reactions. The protein is Ferredoxin YfhL (yfhL) of Escherichia coli (strain K12).